Consider the following 443-residue polypeptide: ATP-dependent protease ATPase subunit HslU (443 aa).

Residues I18, G60–E65, D256, E321, and R393 each bind ATP.

The protein belongs to the ClpX chaperone family. HslU subfamily. As to quaternary structure, a double ring-shaped homohexamer of HslV is capped on each side by a ring-shaped HslU homohexamer. The assembly of the HslU/HslV complex is dependent on binding of ATP.

It is found in the cytoplasm. Functionally, ATPase subunit of a proteasome-like degradation complex; this subunit has chaperone activity. The binding of ATP and its subsequent hydrolysis by HslU are essential for unfolding of protein substrates subsequently hydrolyzed by HslV. HslU recognizes the N-terminal part of its protein substrates and unfolds these before they are guided to HslV for hydrolysis. In Edwardsiella ictaluri (strain 93-146), this protein is ATP-dependent protease ATPase subunit HslU.